The primary structure comprises 199 residues: Ribonuclease HII (199 aa).

The RNase H type-2 domain occupies 10–199 (HLVAGVDEVG…VKRALGLASN (190 aa)). 3 residues coordinate a divalent metal cation: Asp-16, Glu-17, and Asp-108.

This sequence belongs to the RNase HII family. Mn(2+) serves as cofactor. The cofactor is Mg(2+).

It is found in the cytoplasm. It carries out the reaction Endonucleolytic cleavage to 5'-phosphomonoester.. Functionally, endonuclease that specifically degrades the RNA of RNA-DNA hybrids. In Klebsiella pneumoniae (strain 342), this protein is Ribonuclease HII.